The sequence spans 284 residues: Undecaprenyl-diphosphatase (284 aa).

8 consecutive transmembrane segments (helical) span residues 7 to 27 (IILGVIEGITEWLPISSTGHL), 44 to 64 (EMFDVVIQLGAILSVVVLYFH), 90 to 110 (LWLKVLIAALPAAIIGLPLND), 116 to 136 (FYHFVPVAFMLIIYGVAFIVI), 167 to 187 (VLSLLPGTSRSGATIVGALLV), 197 to 217 (FTFFLGIPVMFGASFIKILHF), 229 to 249 (FGVLLVACIVAFGVSMVAIKF), and 259 to 279 (FTFFGKYRIVLGIILLIYAMF).

The protein belongs to the UppP family.

The protein resides in the cell membrane. The enzyme catalyses di-trans,octa-cis-undecaprenyl diphosphate + H2O = di-trans,octa-cis-undecaprenyl phosphate + phosphate + H(+). Catalyzes the dephosphorylation of undecaprenyl diphosphate (UPP). Confers resistance to bacitracin. The sequence is that of Undecaprenyl-diphosphatase from Lactococcus lactis subsp. lactis (strain IL1403) (Streptococcus lactis).